Reading from the N-terminus, the 60-residue chain is Metallothionein (60 aa).

The tract at residues 1–28 (MDPCECSKTGKCSCGGSCTCTNCSCTSC) is beta. 20 residues coordinate a divalent metal cation: cysteine 4, cysteine 6, cysteine 12, cysteine 14, cysteine 18, cysteine 20, cysteine 23, cysteine 25, cysteine 28, cysteine 32, cysteine 33, cysteine 35, cysteine 36, cysteine 40, cysteine 43, cysteine 47, cysteine 49, cysteine 54, cysteine 58, and cysteine 59. An alpha region spans residues 29-60 (KKSCCPCCPSGCSKCASGCVCKGKTCDTSCCQ).

This sequence belongs to the metallothionein superfamily. Type 1 family.

In terms of biological role, metallothioneins have a high content of cysteine residues that bind various heavy metals. In Chelon auratus (Golden grey mullet), this protein is Metallothionein (mt).